Consider the following 273-residue polypeptide: 2,3,4,5-tetrahydropyridine-2,6-dicarboxylate N-succinyltransferase (273 aa).

Substrate is bound by residues Arg104 and Asp141.

Belongs to the transferase hexapeptide repeat family. Homotrimer.

The protein resides in the cytoplasm. It carries out the reaction (S)-2,3,4,5-tetrahydrodipicolinate + succinyl-CoA + H2O = (S)-2-succinylamino-6-oxoheptanedioate + CoA. It functions in the pathway amino-acid biosynthesis; L-lysine biosynthesis via DAP pathway; LL-2,6-diaminopimelate from (S)-tetrahydrodipicolinate (succinylase route): step 1/3. The protein is 2,3,4,5-tetrahydropyridine-2,6-dicarboxylate N-succinyltransferase of Nitrosospira multiformis (strain ATCC 25196 / NCIMB 11849 / C 71).